A 54-amino-acid chain; its full sequence is Ovomucoid (54 aa).

The Kazal-like domain maps to 4–54 (VDCSGYPTHACTLELKPLCGSDNQTYSNKCGFCNAVAQSNGTLTLSHFGKC). 3 disulfides stabilise this stretch: C6–C36, C14–C33, and C22–C54. An N-linked (GlcNAc...) asparagine glycan is attached at N43.

The protein localises to the secreted. In Leipoa ocellata (Malleefowl), this protein is Ovomucoid.